We begin with the raw amino-acid sequence, 706 residues long: Elongation factor G (706 aa).

The tr-type G domain occupies 8 to 290; the sequence is KRYRNIGIVA…GVIEYMPSPT (283 aa). GTP-binding positions include 17–24, 88–92, and 142–145; these read AHVDAGKT, DTPGH, and NKMD.

Belongs to the TRAFAC class translation factor GTPase superfamily. Classic translation factor GTPase family. EF-G/EF-2 subfamily.

The protein localises to the cytoplasm. Functionally, catalyzes the GTP-dependent ribosomal translocation step during translation elongation. During this step, the ribosome changes from the pre-translocational (PRE) to the post-translocational (POST) state as the newly formed A-site-bound peptidyl-tRNA and P-site-bound deacylated tRNA move to the P and E sites, respectively. Catalyzes the coordinated movement of the two tRNA molecules, the mRNA and conformational changes in the ribosome. This Chromohalobacter salexigens (strain ATCC BAA-138 / DSM 3043 / CIP 106854 / NCIMB 13768 / 1H11) protein is Elongation factor G.